The chain runs to 205 residues: Guanylate kinase (205 aa).

The Guanylate kinase-like domain maps to 5 to 183 (GTLYTVSAPS…ALTEFRSIVV (179 aa)). 12-19 (APSGAGKT) contributes to the ATP binding site.

It belongs to the guanylate kinase family.

It is found in the cytoplasm. The enzyme catalyses GMP + ATP = GDP + ADP. In terms of biological role, essential for recycling GMP and indirectly, cGMP. This chain is Guanylate kinase, found in Saccharophagus degradans (strain 2-40 / ATCC 43961 / DSM 17024).